Here is a 142-residue protein sequence, read N- to C-terminus: Alpha-lactalbumin (142 aa).

The first 19 residues, 1–19 (MMSFVSLLLVGILFHATQA), serve as a signal peptide directing secretion. In terms of domain architecture, C-type lysozyme spans 20–142 (EQLTKCEVFR…KLDQWLCEKL (123 aa)). Disulfide bonds link Cys-25/Cys-139, Cys-47/Cys-130, Cys-80/Cys-96, and Cys-92/Cys-110. N-linked (GlcNAc...) asparagine glycans are attached at residues Asn-64 and Asn-93. Ca(2+)-binding residues include Lys-98, Asp-101, Asp-103, Asp-106, and Asp-107.

It belongs to the glycosyl hydrolase 22 family. In terms of assembly, lactose synthase (LS) is a heterodimer of a catalytic component, beta1,4-galactosyltransferase (beta4Gal-T1) and a regulatory component, alpha-lactalbumin (LA). In terms of tissue distribution, mammary gland specific. Secreted in milk.

It is found in the secreted. Functionally, regulatory subunit of lactose synthase, changes the substrate specificity of galactosyltransferase in the mammary gland making glucose a good acceptor substrate for this enzyme. This enables LS to synthesize lactose, the major carbohydrate component of milk. In other tissues, galactosyltransferase transfers galactose onto the N-acetylglucosamine of the oligosaccharide chains in glycoproteins. In Bos mutus grunniens (Wild yak), this protein is Alpha-lactalbumin (LALBA).